The chain runs to 193 residues: Potassium-transporting ATPase KdpC subunit (193 aa).

A helical transmembrane segment spans residues 7-27 (PLIVVFVVLVAVTGLAYPAVM).

This sequence belongs to the KdpC family. In terms of assembly, the system is composed of three essential subunits: KdpA, KdpB and KdpC.

Its subcellular location is the cell inner membrane. Part of the high-affinity ATP-driven potassium transport (or Kdp) system, which catalyzes the hydrolysis of ATP coupled with the electrogenic transport of potassium into the cytoplasm. This subunit acts as a catalytic chaperone that increases the ATP-binding affinity of the ATP-hydrolyzing subunit KdpB by the formation of a transient KdpB/KdpC/ATP ternary complex. The chain is Potassium-transporting ATPase KdpC subunit from Burkholderia mallei (strain NCTC 10247).